The chain runs to 1221 residues: WEB family protein At4g27595, chloroplastic (1221 aa).

Residues Met1 to Pro68 are disordered. Residues Met1 to Met82 constitute a chloroplast transit peptide. The segment covering Ser32 to Pro58 has biased composition (polar residues). Coiled coils occupy residues Thr95 to His149, Thr202 to Lys543, and Ala587 to Ile1084. Residues Glu1073–Glu1083 are compositionally biased toward basic and acidic residues. The tract at residues Glu1073–Lys1221 is disordered. Residues Ile1084–Gln1097 show a composition bias toward polar residues. Basic and acidic residues-rich tracts occupy residues Ala1106–Thr1116 and Lys1129–Asp1160. The span at Asn1175–Glu1187 shows a compositional bias: polar residues.

This sequence belongs to the WEB family.

Its subcellular location is the plastid. It is found in the chloroplast. This is WEB family protein At4g27595, chloroplastic from Arabidopsis thaliana (Mouse-ear cress).